The following is a 308-amino-acid chain: Methionyl-tRNA formyltransferase (308 aa).

Residue 110–113 (SLLP) participates in (6S)-5,6,7,8-tetrahydrofolate binding.

Belongs to the Fmt family.

The enzyme catalyses L-methionyl-tRNA(fMet) + (6R)-10-formyltetrahydrofolate = N-formyl-L-methionyl-tRNA(fMet) + (6S)-5,6,7,8-tetrahydrofolate + H(+). Attaches a formyl group to the free amino group of methionyl-tRNA(fMet). The formyl group appears to play a dual role in the initiator identity of N-formylmethionyl-tRNA by promoting its recognition by IF2 and preventing the misappropriation of this tRNA by the elongation apparatus. This is Methionyl-tRNA formyltransferase from Neisseria meningitidis serogroup C / serotype 2a (strain ATCC 700532 / DSM 15464 / FAM18).